The chain runs to 209 residues: Uracil phosphoribosyltransferase (209 aa).

5-phospho-alpha-D-ribose 1-diphosphate contacts are provided by residues R79, R104, and 131–139; that span reads DPMLATGNS. Uracil is bound by residues I194 and 199–201; that span reads GDA. D200 lines the 5-phospho-alpha-D-ribose 1-diphosphate pocket.

It belongs to the UPRTase family. The cofactor is Mg(2+).

It carries out the reaction UMP + diphosphate = 5-phospho-alpha-D-ribose 1-diphosphate + uracil. The protein operates within pyrimidine metabolism; UMP biosynthesis via salvage pathway; UMP from uracil: step 1/1. With respect to regulation, allosterically activated by GTP. Catalyzes the conversion of uracil and 5-phospho-alpha-D-ribose 1-diphosphate (PRPP) to UMP and diphosphate. This chain is Uracil phosphoribosyltransferase, found in Rhizobium etli (strain CIAT 652).